The sequence spans 259 residues: L-arginine-binding protein (259 aa).

Positions 1–21 (MKKLALLGALALSVLSLPTFA) are cleaved as a signal peptide.

It belongs to the bacterial solute-binding protein 3 family.

The protein localises to the periplasm. In terms of biological role, binds L-arginine with high affinity. Shows no measurable affinity for L-ornithine. In Pseudomonas aeruginosa (strain ATCC 15692 / DSM 22644 / CIP 104116 / JCM 14847 / LMG 12228 / 1C / PRS 101 / PAO1), this protein is L-arginine-binding protein.